The chain runs to 443 residues: UDP-N-acetylmuramate--L-alanine ligase (443 aa).

110-116 (GAHGKTS) is an ATP binding site.

Belongs to the MurCDEF family.

Its subcellular location is the cytoplasm. The enzyme catalyses UDP-N-acetyl-alpha-D-muramate + L-alanine + ATP = UDP-N-acetyl-alpha-D-muramoyl-L-alanine + ADP + phosphate + H(+). Its pathway is cell wall biogenesis; peptidoglycan biosynthesis. In terms of biological role, cell wall formation. This Streptococcus equi subsp. zooepidemicus (strain MGCS10565) protein is UDP-N-acetylmuramate--L-alanine ligase.